The chain runs to 114 residues: RutC family protein YoaB (114 aa).

The protein belongs to the RutC family.

This chain is RutC family protein YoaB (yoaB), found in Escherichia coli O6:H1 (strain CFT073 / ATCC 700928 / UPEC).